The following is a 535-amino-acid chain: T-complex protein 1 subunit beta (535 aa).

A2 bears the N-acetylalanine mark. S3 carries the post-translational modification Phosphoserine. K13 carries the post-translational modification N6-acetyllysine. G44 is an ADP binding site. Residue G44 coordinates ATP. D97 is a Mg(2+) binding site. The ADP site is built by G98, T99, T100, S101, S168, and S169. 3 residues coordinate ATP: G98, T99, and T100. The residue at position 181 (K181) is an N6-acetyllysine. A Glycyl lysine isopeptide (Lys-Gly) (interchain with G-Cter in SUMO2) cross-link involves residue K248. Residue S260 is modified to Phosphoserine. T261 carries the post-translational modification Phosphothreonine. G410, E495, and K500 together coordinate ADP. 2 residues coordinate ATP: E495 and K500.

The protein belongs to the TCP-1 chaperonin family. Component of the chaperonin-containing T-complex (TRiC), a hexadecamer composed of two identical back-to-back stacked rings enclosing a protein folding chamber. Each ring is made up of eight different subunits: TCP1/CCT1, CCT2, CCT3, CCT4, CCT5, CCT6A/CCT6, CCT7, CCT8. Interacts with PACRG. Interacts with FLCN. Interacts with DLEC1. Interacts with SVEP1. In terms of processing, the N-terminus is blocked.

It is found in the cytoplasm. It catalyses the reaction ATP + H2O = ADP + phosphate + H(+). In terms of biological role, component of the chaperonin-containing T-complex (TRiC), a molecular chaperone complex that assists the folding of actin, tubulin and other proteins upon ATP hydrolysis. The TRiC complex mediates the folding of WRAP53/TCAB1, thereby regulating telomere maintenance. As part of the TRiC complex may play a role in the assembly of BBSome, a complex involved in ciliogenesis regulating transports vesicles to the cilia. In Mus musculus (Mouse), this protein is T-complex protein 1 subunit beta (Cct2).